Consider the following 476-residue polypeptide: Amidophosphoribosyltransferase (476 aa).

Positions methionine 1–glutamate 11 are excised as a propeptide. Cysteine 12 (nucleophile) is an active-site residue. A Glutamine amidotransferase type-2 domain is found at cysteine 12–glutamate 231. Cysteine 247 contributes to the [4Fe-4S] cluster binding site. Positions 294, 356, and 357 each coordinate Mg(2+). 3 residues coordinate [4Fe-4S] cluster: cysteine 393, cysteine 448, and cysteine 451.

This sequence in the C-terminal section; belongs to the purine/pyrimidine phosphoribosyltransferase family. As to quaternary structure, homotetramer. It depends on Mg(2+) as a cofactor. The cofactor is [4Fe-4S] cluster.

The catalysed reaction is 5-phospho-beta-D-ribosylamine + L-glutamate + diphosphate = 5-phospho-alpha-D-ribose 1-diphosphate + L-glutamine + H2O. It functions in the pathway purine metabolism; IMP biosynthesis via de novo pathway; N(1)-(5-phospho-D-ribosyl)glycinamide from 5-phospho-alpha-D-ribose 1-diphosphate: step 1/2. With respect to regulation, allosterically regulated; subject to end product regulation by purine nucleotides. In terms of biological role, catalyzes the formation of phosphoribosylamine from phosphoribosylpyrophosphate (PRPP) and glutamine. In Bacillus subtilis (strain 168), this protein is Amidophosphoribosyltransferase.